The following is a 726-amino-acid chain: Amino-acid acetyltransferase, mitochondrial (726 aa).

Residues 1 to 18 are compositionally biased toward polar residues; the sequence is MSSRTLVGLRSTTSTHLQ. Residues 1 to 44 constitute a mitochondrion transit peptide; sequence MSSRTLVGLRSTTSTHLQRSGVAAAAAVSSSSTSSSGSAPRRCL. The disordered stretch occupies residues 1 to 64; it reads MSSRTLVGLR…SAEFSSSSKS (64 aa). The span at 20-39 shows a compositional bias: low complexity; sequence SGVAAAAAVSSSSTSSSGSA. The segment covering 45–58 has biased composition (polar residues); the sequence is SSASGRQVQQSAEF. One can recognise an N-acetyltransferase domain in the interval 547–716; the sequence is DRPRLGLDDP…YEAVCRSIQP (170 aa).

This sequence belongs to the acetyltransferase family.

It is found in the mitochondrion. The catalysed reaction is L-glutamate + acetyl-CoA = N-acetyl-L-glutamate + CoA + H(+). It functions in the pathway amino-acid biosynthesis; L-arginine biosynthesis; N(2)-acetyl-L-ornithine from L-glutamate: step 1/4. N-acetylglutamate synthase involved in arginine biosynthesis. This is Amino-acid acetyltransferase, mitochondrial (arg2) from Aspergillus niger (strain ATCC MYA-4892 / CBS 513.88 / FGSC A1513).